We begin with the raw amino-acid sequence, 361 residues long: Phospho-N-acetylmuramoyl-pentapeptide-transferase (361 aa).

The next 10 membrane-spanning stretches (helical) occupy residues 25–45 (RGILAALTALFLSLWMGPAVI), 73–93 (TMGGSLILLTVTLSVLLWGDL), 98–118 (VWLVLAVMICFGAIGWYDDWI), 139–159 (IFGLAAGLFLYYTADVPAAIT), 168–188 (IALPLAGVSFVVIAYFWIVGF), 200–220 (GLAIMPTVLVACALGVFAYAS), 237–257 (AGELIIICSAIAGAGLGFLWF), 264–284 (VFMGDIGALSLGAVLGTVAVI), 289–309 (LVLVIMGGVFVIETLSVMIQV), and 339–359 (VIVRFWIISVVLVLIGLATLK).

The protein belongs to the glycosyltransferase 4 family. MraY subfamily. Requires Mg(2+) as cofactor.

It is found in the cell inner membrane. The catalysed reaction is UDP-N-acetyl-alpha-D-muramoyl-L-alanyl-gamma-D-glutamyl-meso-2,6-diaminopimeloyl-D-alanyl-D-alanine + di-trans,octa-cis-undecaprenyl phosphate = di-trans,octa-cis-undecaprenyl diphospho-N-acetyl-alpha-D-muramoyl-L-alanyl-D-glutamyl-meso-2,6-diaminopimeloyl-D-alanyl-D-alanine + UMP. It functions in the pathway cell wall biogenesis; peptidoglycan biosynthesis. In terms of biological role, catalyzes the initial step of the lipid cycle reactions in the biosynthesis of the cell wall peptidoglycan: transfers peptidoglycan precursor phospho-MurNAc-pentapeptide from UDP-MurNAc-pentapeptide onto the lipid carrier undecaprenyl phosphate, yielding undecaprenyl-pyrophosphoryl-MurNAc-pentapeptide, known as lipid I. The polypeptide is Phospho-N-acetylmuramoyl-pentapeptide-transferase (Xanthomonas campestris pv. campestris (strain 8004)).